A 354-amino-acid polypeptide reads, in one-letter code: Stimulator of interferon genes protein 3 (354 aa).

Helical transmembrane passes span 20 to 40, 48 to 68, 101 to 121, and 132 to 152; these read VTFA…FALW, INFV…GELI, YGSC…YALL, and YGIF…IVGI. Asn-178, Tyr-183, Arg-250, Ile-251, Lys-253, Glu-272, Ser-275, and Asn-276 together coordinate 3',3'-cGAMP.

It belongs to the STING family.

Its subcellular location is the membrane. In terms of biological role, facilitator of innate immune signaling that acts as a sensor of second messenger signals produced by cyclic GMP-AMP synthase-like receptors (cGLRs) and promotes the production of type I interferon. Innate immune response is triggered in response to nucleotides from viruses and bacteria delivered to the cytoplasm. Acts by binding cyclic dinucleotides: recognizes and binds cyclic 3'-3' linked cGAMP (3'-3'-cGAMP), cyclic di-AMP (3',3'-c-di-AMP) and cyclic di-GMP (3',3'-c-di-GMP) second messengers produced by cGLRs in response to nucleotides in the cytosol, such as double-stranded RNA (dsRNA). Upon binding to 3'-3'-cGAMP, 3',3'-c-di-AMP or 3',3'-c-di-GMP, oligomerizes and promotes the recruitment and subsequent activation of the transcription factor IRF3 to induce expression of type I interferon. In Stylophora pistillata (Smooth cauliflower coral), this protein is Stimulator of interferon genes protein 3.